The sequence spans 327 residues: L-serine dehydratase/L-threonine deaminase (327 aa).

Residue Lys-41 is modified to N6-(pyridoxal phosphate)lysine.

The protein belongs to the serine/threonine dehydratase family. In terms of assembly, homodimer. Pyridoxal 5'-phosphate serves as cofactor.

It localises to the cytoplasm. The enzyme catalyses L-serine = pyruvate + NH4(+). It carries out the reaction L-threonine = 2-oxobutanoate + NH4(+). It participates in carbohydrate biosynthesis; gluconeogenesis. In terms of biological role, catalyzes the pyridoxal-phosphate-dependent dehydrative deamination of L-threonine and L-serine to ammonia and alpha-ketobutyrate and pyruvate, respectively. The protein is L-serine dehydratase/L-threonine deaminase (SDS) of Bos taurus (Bovine).